The primary structure comprises 428 residues: MTWFIDRRLNGKNKSTVNRQRFLRRYKAQIKQSISEAINKRSVTDVDSGESVSIPTDDISEPMFHQGRGGLRHRVHPGNDHFIQNDRIERPQGGGGGGSGSGQGQASQDGEGQDEFVFQISKDEYLDLLFEDLALPNLKKNQHRQLNEYKTHRAGFTSNGVPANISVVRSLQNSLARRTAMTAGKRRELHALETELETISHSEPAQLLEEERLRREIAELRAKIERVPFIDTFDLRYKNYEKRPEPSSQAVMFCLMDVSGSMDQATKDMAKRFYILLYLFLSRTYKNVEVVYIRHHTQAKEVDEHEFFYSQETGGTIVSSALKLMDEVVKERYDPGQWNIYAAQASDGDNWADDSPLCHEILAKKLLPVVRYYSYIEITRRAHQTLWREYEHLQATFDNFAMQHIRDQEDIYPVFRELFQKQSANQSA.

Basic and acidic residues predominate over residues 78–90 (GNDHFIQNDRIER). Residues 78–111 (GNDHFIQNDRIERPQGGGGGGSGSGQGQASQDGE) form a disordered region. Gly residues predominate over residues 92–103 (QGGGGGGSGSGQ).

This sequence belongs to the UPF0229 family.

This chain is UPF0229 protein YeaH, found in Salmonella heidelberg (strain SL476).